The sequence spans 358 residues: UDP-N-acetylglucosamine--N-acetylmuramyl-(pentapeptide) pyrophosphoryl-undecaprenol N-acetylglucosamine transferase (358 aa).

Residues 12 to 14, Asn124, Arg162, Ser185, Ile242, 261 to 266, and Gln287 each bind UDP-N-acetyl-alpha-D-glucosamine; these read TGG and ALTVSE.

This sequence belongs to the glycosyltransferase 28 family. MurG subfamily.

Its subcellular location is the cell inner membrane. The enzyme catalyses di-trans,octa-cis-undecaprenyl diphospho-N-acetyl-alpha-D-muramoyl-L-alanyl-D-glutamyl-meso-2,6-diaminopimeloyl-D-alanyl-D-alanine + UDP-N-acetyl-alpha-D-glucosamine = di-trans,octa-cis-undecaprenyl diphospho-[N-acetyl-alpha-D-glucosaminyl-(1-&gt;4)]-N-acetyl-alpha-D-muramoyl-L-alanyl-D-glutamyl-meso-2,6-diaminopimeloyl-D-alanyl-D-alanine + UDP + H(+). It participates in cell wall biogenesis; peptidoglycan biosynthesis. In terms of biological role, cell wall formation. Catalyzes the transfer of a GlcNAc subunit on undecaprenyl-pyrophosphoryl-MurNAc-pentapeptide (lipid intermediate I) to form undecaprenyl-pyrophosphoryl-MurNAc-(pentapeptide)GlcNAc (lipid intermediate II). This is UDP-N-acetylglucosamine--N-acetylmuramyl-(pentapeptide) pyrophosphoryl-undecaprenol N-acetylglucosamine transferase from Pseudoalteromonas translucida (strain TAC 125).